The following is a 109-amino-acid chain: Preprofallaxidin-8 (109 aa).

The first 22 residues, 1 to 22 (MASLKKSLFLVLFLGLLSLSIC), serve as a signal peptide directing secretion. Positions 23–46 (EEQKRENEEDAEDENHEEESEEKR) are excised as a propeptide. A disordered region spans residues 27–46 (RENEEDAEDENHEEESEEKR). Residues 30-42 (EEDAEDENHEEES) show a composition bias toward acidic residues. At Leu62 the chain carries Leucine amide. The propeptide occupies 66-70 (SEEKR). Met75 carries the post-translational modification Methionine amide. Positions 79–83 (SEEKR) are excised as a propeptide. The residue at position 88 (Met88) is a Methionine amide. Propeptides lie at residues 92-96 (SEEKR) and Ala108.

The protein belongs to the frog skin active peptide (FSAP) family. Brevinin subfamily. As to expression, expressed by the skin glands.

It is found in the secreted. Functionally, fallaxidin-2.1 shows no antibacterial activity against Gram-positive or Gram-negative bacteria. Does not inhibit the formation of NO by neuronal nitric oxide synthase. Has no effect on splenocyte proliferation or smooth muscle contraction. Its function is as follows. Fallaxidin-3.2 shows antibacterial activity against the Gram-positive bacteria E.faecalis (MIC=100 uM) and L.lactis (MIC=500 uM). No antibacterial activity against the Gram-positive bacteria B.cereus, L.innocua, M.luteus, S.epidermidis, S.uberis and S.aureus, or the Gram-negative bacteria E.cloacae and E.coli. The protein is Preprofallaxidin-8 of Litoria fallax (Eastern dwarf tree frog).